Consider the following 414-residue polypeptide: MKTSTKTFAIADTAANADYLTNTSEPLGETMTLNVGPSHPATHGVLRLVLELDGEEIISCDPVVGHLHRGMEKIGETIQYNQFVPYTDRFDYLAPLSNNIAYACAVEKLLGWELPPRGQALRVLALELSRFSSHILGVGVYGMDVGAMTVFLYCYEEREKIHNFYEQLTGARFTSSYTRIGGQTRDVPNEMLKEVLVFCDEAAKTLDETEALLLKNKIFIDRLQGVGVISREKALSWGITGANLRASGIKRDLRKLTPYLGYENYEFDVPVGEHGDCYDRFTVRIEEMRQSLRIIRQVIETMPDGPINMVDTKGTLPEKKKVLTDMESLIRQFMTTTMGVNAPAGQVYFAAENPKGELGFFLDSKGGGLPNRLRMRSPSFCNLSILPELMKGHLVSDVPAILGSFDFVMGECDR.

This sequence belongs to the complex I 49 kDa subunit family. As to quaternary structure, NDH-1 is composed of 14 different subunits. Subunits NuoB, C, D, E, F, and G constitute the peripheral sector of the complex.

It localises to the cell inner membrane. The catalysed reaction is a quinone + NADH + 5 H(+)(in) = a quinol + NAD(+) + 4 H(+)(out). NDH-1 shuttles electrons from NADH, via FMN and iron-sulfur (Fe-S) centers, to quinones in the respiratory chain. The immediate electron acceptor for the enzyme in this species is believed to be ubiquinone. Couples the redox reaction to proton translocation (for every two electrons transferred, four hydrogen ions are translocated across the cytoplasmic membrane), and thus conserves the redox energy in a proton gradient. The protein is NADH-quinone oxidoreductase subunit D of Akkermansia muciniphila (strain ATCC BAA-835 / DSM 22959 / JCM 33894 / BCRC 81048 / CCUG 64013 / CIP 107961 / Muc).